The sequence spans 814 residues: Transcription factor oryO (814 aa).

Disordered stretches follow at residues 1 to 59 and 699 to 723; these read MTAR…PACN and PMDG…SIPP. Polar residues-rich tracts occupy residues 16–27 and 49–59; these read ANPTVRDQTQQD and QPDNTSSPACN. The zn(2)-C6 fungal-type DNA-binding region spans 58–85; sequence CNQCRTRKIRCDRQQPKCSNCRRADVEC. A compositionally biased stretch (low complexity) spans 713–723; the sequence is PSESELSSIPP.

The protein localises to the nucleus. Transcription factor that regulates the expression of the gene cluster that mediates the biosynthesis of oryzines, natural products with an unusual maleidride backbone. This chain is Transcription factor oryO, found in Aspergillus oryzae (strain ATCC 42149 / RIB 40) (Yellow koji mold).